A 122-amino-acid polypeptide reads, in one-letter code: uncharacterized protein (122 aa).

Over methionine 1 to alanine 24 the chain is Cytoplasmic. The chain crosses the membrane as a helical span at residues phenylalanine 25–valine 45. At proline 46–asparagine 57 the chain is on the extracellular side. Residues serine 58 to leucine 78 traverse the membrane as a helical segment. The Cytoplasmic portion of the chain corresponds to lysine 79–alanine 122.

Its subcellular location is the membrane. This is an uncharacterized protein from Saccharomyces cerevisiae (strain ATCC 204508 / S288c) (Baker's yeast).